We begin with the raw amino-acid sequence, 193 residues long: Thymidine kinase (193 aa).

Residues 9–16 and 87–90 contribute to the ATP site; these read STMNAGKS and DEAQ. Residue E88 is the Proton acceptor of the active site. Residues C145, C147, C182, and H185 each coordinate Zn(2+).

The protein belongs to the thymidine kinase family. In terms of assembly, homotetramer.

Its subcellular location is the cytoplasm. It carries out the reaction thymidine + ATP = dTMP + ADP + H(+). In Haemophilus influenzae (strain 86-028NP), this protein is Thymidine kinase.